The following is a 360-amino-acid chain: Phospho-N-acetylmuramoyl-pentapeptide-transferase (360 aa).

Transmembrane regions (helical) follow at residues 27 to 47 (GAMITSALIVFLFGPTIINSL), 71 to 91 (TPTMGGLMIMTGILASCLLWA), 93 to 113 (LASVYVWVVLMVSVGFGAIGF), 128 to 148 (FSGKARLGIEFLIAAIAAFTI), 168 to 188 (LVINLSWFFILFAAFVMVGAG), 199 to 219 (GLAIVPVMVAAASFGFIAYLS), 239 to 259 (LAVVLGAVIGAGLGFLWFNAP), 262 to 282 (AIFMGDTGSLALGGMLGTVAV), 288 to 308 (IVLAIIGGLFVMEALSVIIQV), and 337 to 357 (QVVIRFWIVAIILAMIGLSTL).

It belongs to the glycosyltransferase 4 family. MraY subfamily. The cofactor is Mg(2+).

It localises to the cell inner membrane. It carries out the reaction UDP-N-acetyl-alpha-D-muramoyl-L-alanyl-gamma-D-glutamyl-meso-2,6-diaminopimeloyl-D-alanyl-D-alanine + di-trans,octa-cis-undecaprenyl phosphate = di-trans,octa-cis-undecaprenyl diphospho-N-acetyl-alpha-D-muramoyl-L-alanyl-D-glutamyl-meso-2,6-diaminopimeloyl-D-alanyl-D-alanine + UMP. It participates in cell wall biogenesis; peptidoglycan biosynthesis. Functionally, catalyzes the initial step of the lipid cycle reactions in the biosynthesis of the cell wall peptidoglycan: transfers peptidoglycan precursor phospho-MurNAc-pentapeptide from UDP-MurNAc-pentapeptide onto the lipid carrier undecaprenyl phosphate, yielding undecaprenyl-pyrophosphoryl-MurNAc-pentapeptide, known as lipid I. The protein is Phospho-N-acetylmuramoyl-pentapeptide-transferase of Brucella ovis (strain ATCC 25840 / 63/290 / NCTC 10512).